A 217-amino-acid polypeptide reads, in one-letter code: Homologous-pairing protein 2 homolog (217 aa).

Residues A84–N152 are a coiled coil. The tract at residues T118–E182 is DNA-binding.

This sequence belongs to the HOP2 family. In terms of assembly, interacts with the DNA-binding domain of the nuclear receptors NR3C1/GR, ESR2/ER-beta, THRB and RXRA. Forms a stable heterodimer with MND1. Interacts with PSMC3/TBP1. In terms of processing, phosphorylated by PKA, PKC and MAPK. Highly expressed in testis and more specifically in spermatocytes. Detected in spleen, ovary and thymus.

It is found in the nucleus. Functionally, plays an important role in meiotic recombination. Stimulates DMC1-mediated strand exchange required for pairing homologous chromosomes during meiosis. The complex PSMC3IP/MND1 binds DNA, stimulates the recombinase activity of DMC1 as well as DMC1 D-loop formation from double-strand DNA. This complex stabilizes presynaptic RAD51 and DMC1 filaments formed on single strand DNA to capture double-strand DNA. This complex stimulates both synaptic and presynaptic critical steps in RAD51 and DMC1-promoted homologous pairing. May inhibit HIV-1 viral protein TAT activity and modulate the activity of proteasomes through association with PSMC3. The chain is Homologous-pairing protein 2 homolog (Psmc3ip) from Mus musculus (Mouse).